The chain runs to 1005 residues: Isoleucine--tRNA ligase (1005 aa).

The 'HIGH' region signature appears at 70–80; the sequence is PYANGNIHIGH. Glu629 contributes to the L-isoleucyl-5'-AMP binding site. A 'KMSKS' region motif is present at residues 670–674; the sequence is KMSKS. Lys673 is an ATP binding site.

The protein belongs to the class-I aminoacyl-tRNA synthetase family. IleS type 1 subfamily. Monomer.

It is found in the cytoplasm. The catalysed reaction is tRNA(Ile) + L-isoleucine + ATP = L-isoleucyl-tRNA(Ile) + AMP + diphosphate. Catalyzes the attachment of isoleucine to tRNA(Ile). As IleRS can inadvertently accommodate and process structurally similar amino acids such as valine, to avoid such errors it has two additional distinct tRNA(Ile)-dependent editing activities. One activity is designated as 'pretransfer' editing and involves the hydrolysis of activated Val-AMP. The other activity is designated 'posttransfer' editing and involves deacylation of mischarged Val-tRNA(Ile). This chain is Isoleucine--tRNA ligase, found in Rhodopseudomonas palustris (strain ATCC BAA-98 / CGA009).